A 2656-amino-acid polypeptide reads, in one-letter code: 1-phosphatidylinositol 3-phosphate 5-kinase (2656 aa).

The disordered stretch occupies residues 24 to 159; that stretch reads FGTDDSQKDF…NSTNNDTSSN (136 aa). 2 stretches are compositionally biased toward low complexity: residues 59 to 107 and 124 to 159; these read NNNN…NNNN and SNTT…TSSN. An FYVE-type zinc finger spans residues 198–255; sequence DHSSAVCYECSEEFTTFKRRHHCRLCGQIFCWKCSQKTLTDGKGERVRVCNFCYRRYM. Positions 204, 207, 220, 223, 228, 231, 247, and 250 each coordinate Zn(2+). The segment covering 304–331 has biased composition (polar residues); the sequence is NVSLGNSGDNSSFVQSPNNNFSQSPTFS. Disordered stretches follow at residues 304 to 383, 465 to 495, 517 to 570, 618 to 657, 670 to 823, 1115 to 1150, 1633 to 1659, 1710 to 1844, 2031 to 2127, 2179 to 2208, 2246 to 2304, and 2617 to 2656; these read NVSL…NNQQ, DHHQ…SPIV, DNLD…SSSS, NNND…NTSF, TIGR…QQQP, SNSI…NNST, RSKR…QILI, VNNN…SSTP, QQQQ…SISP, NQQQ…SIIE, QQGD…SSNS, and NNNN…QINK. Residues 332–355 show a composition bias toward low complexity; sequence QQQQQQQQQQQQQQQQQQQQQQQQ. 3 stretches are compositionally biased toward polar residues: residues 356–371, 473–489, and 542–557; these read TTGV…NSTL, SNSH…TPSG, and SHSS…TVST. 5 stretches are compositionally biased toward low complexity: residues 558–570, 618–637, 674–730, 743–757, and 811–823; these read GESN…SSSS, NNND…NNNN, NNNN…NLPN, QQQQ…QPQP, and PSSS…QQQP. Low complexity-rich tracts occupy residues 1639–1656 and 1710–1746; these read QQQQ…PQPQ and VNNN…NNNN. Coiled-coil stretches lie at residues 1741 to 1823 and 2019 to 2061; these read NNNN…NNNN and KRIS…QQEQ. Residues 1750–1798 show a composition bias toward basic and acidic residues; sequence NKSENENENKNENKNENENENENKNENKNENENENKKENENQLEIKNEN. Low complexity-rich tracts occupy residues 1807–1833, 2031–2061, 2078–2107, and 2118–2127; these read NNNN…IDNN, QQQQ…QQEQ, SPSS…SETN, and LSGSPISISP. Basic and acidic residues predominate over residues 2193–2202; it reads IDEKDDRNTE. Composition is skewed to low complexity over residues 2252 to 2283 and 2618 to 2647; these read NNNN…NNNN and NNNN…GNIN. Positions 2275 to 2596 constitute a PIPK domain; sequence NNNNTNNNNE…RFRDAMWLYF (322 aa).

The protein resides in the endosome membrane. The protein localises to the early endosome membrane. Its subcellular location is the cytoplasmic vesicle. It is found in the phagosome membrane. It localises to the late endosome membrane. The enzyme catalyses a 1,2-diacyl-sn-glycero-3-phospho-(1D-myo-inositol-3-phosphate) + ATP = a 1,2-diacyl-sn-glycero-3-phospho-(1D-myo-inositol-3,5-bisphosphate) + ADP + H(+). It catalyses the reaction a 1,2-diacyl-sn-glycero-3-phospho-(1D-myo-inositol) + ATP = a 1,2-diacyl-sn-glycero-3-phospho-(1D-myo-inositol-5-phosphate) + ADP + H(+). The catalysed reaction is L-seryl-[protein] + ATP = O-phospho-L-seryl-[protein] + ADP + H(+). Dual specificity kinase part of the PI(3,5)P2 regulatory complex which regulates both the synthesis and turnover of phosphatidylinositol 3,5-bisphosphate (PtdIns(3,5)P2). Catalyzes the phosphorylation of phosphatidylinositol 3-phosphate on the fifth hydroxyl of the myo-inositol ring, to form phosphatidylinositol 3,5-bisphosphate. In Dictyostelium discoideum (Social amoeba), this protein is 1-phosphatidylinositol 3-phosphate 5-kinase (pip5k3).